The primary structure comprises 90 residues: Small ribosomal subunit protein bS20 (90 aa).

This sequence belongs to the bacterial ribosomal protein bS20 family.

In terms of biological role, binds directly to 16S ribosomal RNA. This chain is Small ribosomal subunit protein bS20, found in Acidiphilium cryptum (strain JF-5).